The sequence spans 103 residues: Small ubiquitin-related modifier 2 (103 aa).

Residues 15–92 (AHINLKVKGQ…IDAMLHQTGG (78 aa)) form the Ubiquitin-like domain. Residue G92 forms a Glycyl lysine isopeptide (Gly-Lys) (interchain with K-? in acceptor proteins) linkage.

It belongs to the ubiquitin family. SUMO subfamily. Interacts with SAE2, SCE1, SIZ1 and MMS21. Interacts with HSFA2. Covalently attached to ABI5, FLD, GTE3, HSFA2 and ICE1.

The protein localises to the nucleus. It is found in the cytoplasm. Ubiquitin-like protein which can be covalently attached to target lysines as a monomer. Does not seem to be involved in protein degradation and may function as an antagonist of ubiquitin in the degradation process. Required for the massive protein sumoylation in the nucleus induced by heat shock and controlled by SIZ1. In Arabidopsis thaliana (Mouse-ear cress), this protein is Small ubiquitin-related modifier 2.